The following is a 130-amino-acid chain: Phosphomevalonate dehydratase small subunit (130 aa).

Ser62 functions as the Proton acceptor in the catalytic mechanism.

This sequence belongs to the AcnX type II small subunit family. Heterodimer composed of a large subunit (PMDh-L) and a small subunit (PMDh-S).

The enzyme catalyses (R)-5-phosphomevalonate = (2E)-3-methyl-5-phosphooxypent-2-enoate + H2O. Its pathway is isoprenoid biosynthesis; isopentenyl diphosphate biosynthesis via mevalonate pathway. In terms of biological role, component of a hydro-lyase that catalyzes the dehydration of mevalonate 5-phosphate (MVA5P) to form trans-anhydromevalonate 5-phosphate (tAHMP). Involved in the archaeal mevalonate (MVA) pathway, which provides fundamental precursors for isoprenoid biosynthesis, such as isopentenyl diphosphate (IPP) and dimethylallyl diphosphate (DMAPP). In Thermococcus onnurineus (strain NA1), this protein is Phosphomevalonate dehydratase small subunit.